A 661-amino-acid polypeptide reads, in one-letter code: Transcription factor ccg-8 (661 aa).

Basic residues predominate over residues 1-11; the sequence is MEHHHHHRHMH. Disordered regions lie at residues 1–69, 107–243, 255–279, and 354–398; these read MEHH…QADN, SASS…LDDP, LKTD…DQNQ, and RTKS…RRTS. Low complexity-rich tracts occupy residues 23 to 43 and 107 to 140; these read HQQY…QHQQ and SASS…SSNR. Residues 173–187 show a composition bias toward polar residues; sequence DHSLPSIASLNVGSS. Positions 192–203 are enriched in pro residues; sequence QPTPTPQPPPKF. Positions 357-366 are enriched in basic and acidic residues; sequence SSSDTRESGQ.

Transcription factor that plays a pivotal role in azole adaptive responses by regulating the drug accumulation in the cells. Affects the transcriptional responses to ketoconazole of many genes, including the target gene (erg11), an azole transporter gene (cdr4), a hexose transporter gene (hxt13), a stress response gene (kts-1), two transcription factor genes (named kts-2 and fsd-1/ndt80). Also regulates phospholipid synthesis that is not involved in azole resistance. The sequence is that of Transcription factor ccg-8 from Neurospora crassa (strain ATCC 24698 / 74-OR23-1A / CBS 708.71 / DSM 1257 / FGSC 987).